A 296-amino-acid polypeptide reads, in one-letter code: Phosphoribosylaminoimidazole-succinocarboxamide synthase (296 aa).

This sequence belongs to the SAICAR synthetase family.

The catalysed reaction is 5-amino-1-(5-phospho-D-ribosyl)imidazole-4-carboxylate + L-aspartate + ATP = (2S)-2-[5-amino-1-(5-phospho-beta-D-ribosyl)imidazole-4-carboxamido]succinate + ADP + phosphate + 2 H(+). Its pathway is purine metabolism; IMP biosynthesis via de novo pathway; 5-amino-1-(5-phospho-D-ribosyl)imidazole-4-carboxamide from 5-amino-1-(5-phospho-D-ribosyl)imidazole-4-carboxylate: step 1/2. The polypeptide is Phosphoribosylaminoimidazole-succinocarboxamide synthase (Geobacter metallireducens (strain ATCC 53774 / DSM 7210 / GS-15)).